The sequence spans 752 residues: Sialidase 85-1.1 (752 aa).

Residues 1–23 (MSRRVFASAVLLLIVVTMCCGGA) form the signal peptide. BNR repeat units lie at residues 274–285 (IYSKDNGSTWSL) and 319–330 (YVSRDMGTTWTE). The segment at 693-725 (APEPQVKIAPKPAAPAAPAGNEETARETGDGGA) is disordered. Over residues 701-711 (APKPAAPAAPA) the composition is skewed to low complexity.

Belongs to the glycosyl hydrolase 33 family.

The enzyme catalyses Hydrolysis of alpha-(2-&gt;3)-, alpha-(2-&gt;6)-, alpha-(2-&gt;8)- glycosidic linkages of terminal sialic acid residues in oligosaccharides, glycoproteins, glycolipids, colominic acid and synthetic substrates.. Its function is as follows. Developmentally regulated neuraminidase implicated in parasite invasion of cells. May contribute to the pathology during T.cruzi infection by cleaving sialic acid from cells of the immune system. The sequence is that of Sialidase 85-1.1 (SA85-1.1) from Trypanosoma cruzi.